We begin with the raw amino-acid sequence, 465 residues long: 2-methylcitrate synthase, mitochondrial (465 aa).

CoA is bound by residues Arg72 and Lys190. His265 contacts oxaloacetate. Leu300 lines the CoA pocket. The active site involves His301. Residues Val342, Gly344, and Tyr345 each contribute to the CoA site. Oxaloacetate is bound by residues His347 and Arg356. Residue His347 is part of the active site. The CoA site is built by Thr394, Lys395, and Asn400. Asp402 is a catalytic residue. Positions 428 and 448 each coordinate oxaloacetate.

It belongs to the citrate synthase family. Homodimer.

It localises to the mitochondrion matrix. It carries out the reaction propanoyl-CoA + oxaloacetate + H2O = (2S,3S)-2-methylcitrate + CoA + H(+). It catalyses the reaction oxaloacetate + acetyl-CoA + H2O = citrate + CoA + H(+). Its pathway is organic acid metabolism; propanoate degradation. With respect to regulation, activity is inhibited by p-chloromercuribenzoate (pCMB), monoiodoacetamide, H(2)O(2), ATP, ADP, NADH, NADPH, Hg(2+) and Zn(2+). In terms of biological role, component of the methylcitrate cycle that catalyzes the synthesis of (2S,3S)-2-methylcitrate from propionyl-CoA and oxaloacetate. Plays an important role in detoxification of propionyl-CoA, an inhibitor of both primary and secondary metabolism. Also has citrate synthase activity using as substrates acetyl-CoA and oxaloacetate. The protein is 2-methylcitrate synthase, mitochondrial of Yarrowia lipolytica (strain CLIB 122 / E 150) (Yeast).